The chain runs to 210 residues: Uracil phosphoribosyltransferase (210 aa).

Residues Arg80, Arg105, and 132-140 (DPMLATGGS) contribute to the 5-phospho-alpha-D-ribose 1-diphosphate site. Uracil-binding positions include Ile195 and 200–202 (GDA). Asp201 serves as a coordination point for 5-phospho-alpha-D-ribose 1-diphosphate.

Belongs to the UPRTase family. It depends on Mg(2+) as a cofactor.

It catalyses the reaction UMP + diphosphate = 5-phospho-alpha-D-ribose 1-diphosphate + uracil. It functions in the pathway pyrimidine metabolism; UMP biosynthesis via salvage pathway; UMP from uracil: step 1/1. Its activity is regulated as follows. Allosterically activated by GTP. In terms of biological role, catalyzes the conversion of uracil and 5-phospho-alpha-D-ribose 1-diphosphate (PRPP) to UMP and diphosphate. The protein is Uracil phosphoribosyltransferase of Deinococcus radiodurans (strain ATCC 13939 / DSM 20539 / JCM 16871 / CCUG 27074 / LMG 4051 / NBRC 15346 / NCIMB 9279 / VKM B-1422 / R1).